A 258-amino-acid polypeptide reads, in one-letter code: Na(+)-translocating NADH-quinone reductase subunit C (258 aa).

Residues 14–34 (LIVVLAVSLICSVIVAGAVVG) form a helical membrane-spanning segment. At Ser226 the chain carries FMN phosphoryl serine.

Belongs to the NqrC family. In terms of assembly, composed of six subunits; NqrA, NqrB, NqrC, NqrD, NqrE and NqrF. FMN serves as cofactor.

Its subcellular location is the cell inner membrane. It catalyses the reaction a ubiquinone + n Na(+)(in) + NADH + H(+) = a ubiquinol + n Na(+)(out) + NAD(+). Its function is as follows. NQR complex catalyzes the reduction of ubiquinone-1 to ubiquinol by two successive reactions, coupled with the transport of Na(+) ions from the cytoplasm to the periplasm. NqrA to NqrE are probably involved in the second step, the conversion of ubisemiquinone to ubiquinol. This is Na(+)-translocating NADH-quinone reductase subunit C from Neisseria meningitidis serogroup B (strain ATCC BAA-335 / MC58).